The chain runs to 167 residues: Small ribosomal subunit protein uS5 (167 aa).

Positions 12-75 (LQEKLVQVNR…DAARKNMITV (64 aa)) constitute an S5 DRBM domain.

The protein belongs to the universal ribosomal protein uS5 family. Part of the 30S ribosomal subunit. Contacts proteins S4 and S8.

Functionally, with S4 and S12 plays an important role in translational accuracy. In terms of biological role, located at the back of the 30S subunit body where it stabilizes the conformation of the head with respect to the body. In Hahella chejuensis (strain KCTC 2396), this protein is Small ribosomal subunit protein uS5.